A 279-amino-acid polypeptide reads, in one-letter code: Large ribosomal subunit protein uL2 (279 aa).

2 disordered regions span residues 1–43 (MGIK…TAGR) and 207–279 (KAGR…PGKH). A compositionally biased stretch (polar residues) spans 8–22 (PTTNGRRNMTASDFS). Over residues 23–33 (EITKTKPEKSL) the composition is skewed to basic and acidic residues. The segment covering 34–43 (LDSQSHTAGR) has biased composition (polar residues). Basic residues-rich tracts occupy residues 209 to 219 (GRTRWQGKRPT) and 254 to 279 (TLGKKTRNKKARSNKLIVRGRRPGKH).

It belongs to the universal ribosomal protein uL2 family. Part of the 50S ribosomal subunit. Forms a bridge to the 30S subunit in the 70S ribosome.

Functionally, one of the primary rRNA binding proteins. Required for association of the 30S and 50S subunits to form the 70S ribosome, for tRNA binding and peptide bond formation. It has been suggested to have peptidyltransferase activity; this is somewhat controversial. Makes several contacts with the 16S rRNA in the 70S ribosome. This is Large ribosomal subunit protein uL2 from Lactiplantibacillus plantarum (strain ATCC BAA-793 / NCIMB 8826 / WCFS1) (Lactobacillus plantarum).